The sequence spans 271 residues: MSSHADSKPWTVPALAQAKREGRKLVMLTAYDAGFARTFDAHGVDLILVGDSLGMVVQGHDSTLPVTTADMVYHTAAVARALDRALLVADLSFQADATPERALDAATQLLQAGAEMVKIEGAGHKLEVIRYLVEREIPVCSHLGLTPQSVLRFGGYKVQGRGEAGEQLRRDAQAVVDAGASLLVLECVPTPIATQISADLSVPTIGIGAGPGCDGQVLVMHDMLGLDSGHRRPKFVKDFLAEGGSVAGAVRAYAQAVRDGSFPDAEHAYAA.

Mg(2+) contacts are provided by Asp-51 and Asp-90. 3-methyl-2-oxobutanoate contacts are provided by residues 51–52, Asp-90, and Lys-118; that span reads DS. Glu-120 lines the Mg(2+) pocket. Residue Glu-186 is the Proton acceptor of the active site.

The protein belongs to the PanB family. In terms of assembly, homodecamer; pentamer of dimers. Requires Mg(2+) as cofactor.

It localises to the cytoplasm. The catalysed reaction is 3-methyl-2-oxobutanoate + (6R)-5,10-methylene-5,6,7,8-tetrahydrofolate + H2O = 2-dehydropantoate + (6S)-5,6,7,8-tetrahydrofolate. The protein operates within cofactor biosynthesis; (R)-pantothenate biosynthesis; (R)-pantoate from 3-methyl-2-oxobutanoate: step 1/2. Catalyzes the reversible reaction in which hydroxymethyl group from 5,10-methylenetetrahydrofolate is transferred onto alpha-ketoisovalerate to form ketopantoate. The polypeptide is 3-methyl-2-oxobutanoate hydroxymethyltransferase (Xanthomonas euvesicatoria pv. vesicatoria (strain 85-10) (Xanthomonas campestris pv. vesicatoria)).